The sequence spans 1094 residues: Formin-like protein 1 (1094 aa).

Disordered regions lie at residues Met1 to Met29, Ser173 to Ser199, and Ala507 to Ala627. Gly2 is lipidated: N-myristoyl glycine. Ser7 carries the post-translational modification Phosphoserine. Positions Ala16–Pro28 are enriched in pro residues. Positions Gln27 to Val464 constitute a GBD/FH3 domain. At Ser184 the chain carries Phosphoserine. Over residues Arg519–Glu529 the composition is skewed to polar residues. Composition is skewed to pro residues over residues Ala535–Pro549 and Pro559–Pro610. Residues Ala627–Thr1018 enclose the FH2 domain. Residue Ser688 is modified to Phosphoserine. Residues Trp1002 to Pro1017 show a composition bias toward basic and acidic residues. The interval Trp1002 to Leu1094 is disordered. Ser1021 carries the post-translational modification Phosphoserine. The region spanning Ser1049–Pro1082 is the DAD domain.

This sequence belongs to the formin homology family. As to quaternary structure, interacts with RAC1, PFN1 and PFN2. Interacts (activated by RAC1) with SRGAP2 (via SH3 domain); regulates the actin filament severing activity of FMNL1. Myristoylation mediates membrane localization. Highly expressed in the spleen, lymph node and bone marrow cells.

Its subcellular location is the cytoplasm. The protein resides in the cell membrane. It is found in the cytoplasmic vesicle. It localises to the phagosome. Functionally, plays a role in the regulation of cell morphology and cytoskeletal organization. Required in the cortical actin filament dynamics and cell shape. May play a role in the control of cell motility and survival of macrophages. The protein is Formin-like protein 1 (Fmnl1) of Mus musculus (Mouse).